Reading from the N-terminus, the 565-residue chain is NAD-dependent malic enzyme (565 aa).

The active-site Proton donor is the tyrosine 104. Arginine 157 provides a ligand contact to NAD(+). Lysine 175 functions as the Proton acceptor in the catalytic mechanism. Positions 246, 247, and 270 each coordinate a divalent metal cation. Residues aspartate 270 and asparagine 418 each coordinate NAD(+).

This sequence belongs to the malic enzymes family. Homotetramer. Requires Mg(2+) as cofactor. Mn(2+) serves as cofactor.

It catalyses the reaction (S)-malate + NAD(+) = pyruvate + CO2 + NADH. The enzyme catalyses oxaloacetate + H(+) = pyruvate + CO2. The polypeptide is NAD-dependent malic enzyme (Escherichia coli (strain SMS-3-5 / SECEC)).